The following is a 133-amino-acid chain: UPF0102 protein Plav_3586 (133 aa).

Belongs to the UPF0102 family.

In Parvibaculum lavamentivorans (strain DS-1 / DSM 13023 / NCIMB 13966), this protein is UPF0102 protein Plav_3586.